The following is a 79-amino-acid chain: Calcium/calmodulin-dependent protein kinase II inhibitor 2 (79 aa).

The segment at 1–21 is disordered; that stretch reads MSEILPYSEDKMGRFGADPEG. The tract at residues 43–69 is inhibitory domain; it reads KRPPKLGQIGRAKRVVIEDDRIDDVLK.

This sequence belongs to the CAMK2N family. Interacts with CAMK2A and CAMK2B in the presence of Ca(2+)/calmodulin or after autophosphorylation.

It localises to the nucleus. The protein localises to the cytoplasm. It is found in the cytosol. The protein resides in the synapse. Functionally, potent and specific cellular inhibitor of CaM-kinase II (CAMK2). Traps Ca(2+)/calmodulin on CAMK2. This chain is Calcium/calmodulin-dependent protein kinase II inhibitor 2 (CAMK2N2), found in Bos taurus (Bovine).